The sequence spans 365 residues: tRNA-specific 2-thiouridylase MnmA (365 aa).

ATP contacts are provided by residues 9-16 (GLSGGVDS) and methionine 35. Residues 95-97 (NPD) form an interaction with target base in tRNA region. Residue cysteine 100 is the Nucleophile of the active site. Cysteine 100 and cysteine 196 are disulfide-bonded. Glycine 124 contributes to the ATP binding site. Residues 146–148 (KDQ) are interaction with tRNA. Cysteine 196 functions as the Cysteine persulfide intermediate in the catalytic mechanism. The segment at 315–316 (RY) is interaction with tRNA.

It belongs to the MnmA/TRMU family.

It is found in the cytoplasm. The catalysed reaction is S-sulfanyl-L-cysteinyl-[protein] + uridine(34) in tRNA + AH2 + ATP = 2-thiouridine(34) in tRNA + L-cysteinyl-[protein] + A + AMP + diphosphate + H(+). Catalyzes the 2-thiolation of uridine at the wobble position (U34) of tRNA, leading to the formation of s(2)U34. The chain is tRNA-specific 2-thiouridylase MnmA from Dechloromonas aromatica (strain RCB).